The sequence spans 341 residues: 33 kDa chaperonin (341 aa).

Cystine bridges form between Cys-245-Cys-247 and Cys-278-Cys-281.

It belongs to the HSP33 family. Post-translationally, under oxidizing conditions two disulfide bonds are formed involving the reactive cysteines. Under reducing conditions zinc is bound to the reactive cysteines and the protein is inactive.

The protein resides in the cytoplasm. Redox regulated molecular chaperone. Protects both thermally unfolding and oxidatively damaged proteins from irreversible aggregation. Plays an important role in the bacterial defense system toward oxidative stress. This is 33 kDa chaperonin from Thermus thermophilus (strain ATCC 27634 / DSM 579 / HB8).